A 177-amino-acid polypeptide reads, in one-letter code: Ribulose bisphosphate carboxylase small subunit, chloroplastic 5 (177 aa).

The transit peptide at 1–56 directs the protein to the chloroplast; sequence MASSMMASTAAVARAGPAQSSMVAPFNGLRSSVAFPATRKANNDLSTLPSNGGRVS.

It belongs to the RuBisCO small chain family. As to quaternary structure, heterohexadecamer of 8 large and 8 small subunits.

Its subcellular location is the plastid. The protein localises to the chloroplast. RuBisCO catalyzes two reactions: the carboxylation of D-ribulose 1,5-bisphosphate, the primary event in carbon dioxide fixation, as well as the oxidative fragmentation of the pentose substrate. Both reactions occur simultaneously and in competition at the same active site. Although the small subunit is not catalytic it is essential for maximal activity. This is Ribulose bisphosphate carboxylase small subunit, chloroplastic 5 from Lemna gibba (Swollen duckweed).